A 112-amino-acid polypeptide reads, in one-letter code: Ribosome-binding factor A (112 aa).

Belongs to the RbfA family. Monomer. Binds 30S ribosomal subunits, but not 50S ribosomal subunits or 70S ribosomes.

The protein resides in the cytoplasm. In terms of biological role, one of several proteins that assist in the late maturation steps of the functional core of the 30S ribosomal subunit. Associates with free 30S ribosomal subunits (but not with 30S subunits that are part of 70S ribosomes or polysomes). Required for efficient processing of 16S rRNA. May interact with the 5'-terminal helix region of 16S rRNA. The chain is Ribosome-binding factor A from Mycoplasmopsis pulmonis (strain UAB CTIP) (Mycoplasma pulmonis).